Reading from the N-terminus, the 298-residue chain is Cyclin-dependent kinase 1 (298 aa).

At Ser-2 the chain carries N-acetylserine. The 288-residue stretch at 8 to 295 (YKRLEKVGEG…ARRAAIHPYF (288 aa)) folds into the Protein kinase domain. ATP-binding positions include 14-22 (VGEGTYGVV) and Lys-40. A Phosphotyrosine modification is found at Tyr-19. Asp-136 (proton acceptor) is an active-site residue. Residue Thr-169 is modified to Phosphothreonine.

The protein belongs to the protein kinase superfamily. CMGC Ser/Thr protein kinase family. CDC2/CDKX subfamily. Forms a stable but non-covalent complex with the CKS1 protein and with a cyclin.

It catalyses the reaction L-seryl-[protein] + ATP = O-phospho-L-seryl-[protein] + ADP + H(+). It carries out the reaction L-threonyl-[protein] + ATP = O-phospho-L-threonyl-[protein] + ADP + H(+). Phosphorylation at Thr-18 or Tyr-19 inactivates the enzyme, while phosphorylation at Thr-169 activates it. In terms of biological role, cyclin-dependent kinase that acts as a master regulator of the mitotic and meiotic cell cycles. Required to drive the G1-S transition. More than 200 substrates have been identified. Substrate specificity is in part regulated by the bound cyclin protein. Phosphorylates YTA7 during S-phase to promote transcription of histones. May phosphorylate CNN1, to contribute to the enrichment of CNN1 on anaphase kinetochores. This is Cyclin-dependent kinase 1 from Saccharomyces cerevisiae (strain ATCC 204508 / S288c) (Baker's yeast).